We begin with the raw amino-acid sequence, 1134 residues long: Error-prone DNA polymerase (1134 aa).

Residues 1–33 are disordered; that stretch reads MSYHNPPIPWRELEGRISGRPAPHGHQESHADQ.

Belongs to the DNA polymerase type-C family. DnaE2 subfamily.

Its subcellular location is the cytoplasm. It carries out the reaction DNA(n) + a 2'-deoxyribonucleoside 5'-triphosphate = DNA(n+1) + diphosphate. Functionally, DNA polymerase involved in damage-induced mutagenesis and translesion synthesis (TLS). It is not the major replicative DNA polymerase. The protein is Error-prone DNA polymerase of Cutibacterium acnes (strain DSM 16379 / KPA171202) (Propionibacterium acnes).